The sequence spans 31 residues: Cytochrome b6-f complex subunit 6 (31 aa).

A helical transmembrane segment spans residues 3–23 (VAIDYFLLVGFCFAVTSGLWI).

Belongs to the PetL family. The 4 large subunits of the cytochrome b6-f complex are cytochrome b6, subunit IV (17 kDa polypeptide, PetD), cytochrome f and the Rieske protein, while the 4 small subunits are PetG, PetL, PetM and PetN. The complex functions as a dimer.

It localises to the plastid. The protein resides in the chloroplast thylakoid membrane. Component of the cytochrome b6-f complex, which mediates electron transfer between photosystem II (PSII) and photosystem I (PSI), cyclic electron flow around PSI, and state transitions. PetL is important for photoautotrophic growth as well as for electron transfer efficiency and stability of the cytochrome b6-f complex. The chain is Cytochrome b6-f complex subunit 6 from Phaeodactylum tricornutum (strain CCAP 1055/1).